We begin with the raw amino-acid sequence, 574 residues long: MTVKDIPFWRVLLIFQTARVYAGFGDPREAITIIHQQHGKPCDCAGGYVITAPTVYLATVSCSSHTAYQPSDSLKWRCVSNPTLANGENIGNCPCQTFKESVHSSCYTTYQECFFGNKTYYTAILASNRAPTIGTSNVPTVLGNTHNLLSAGCTGTVGQHICWNPKAPVHISDGGGPQDKAREIAVQKRLEEIHRSLFPELRYHPLALPKARGKEKIDAQTFNLLTATYSLLNKSNPNLANECWLCLPSGNPVPLAIPSNDSFLGSNLSCPIIPPLLVQPLEFINLINASCLYSPSQNNSFDVDVGLVEFTNCSTTLNISHSLCAPNSSVFVCGNNKAYTYLPTNWTGTCVLATLLPDIDIVPGDAPVPVPAIDHYLHRARRAVQFIPLLVGLGITTAVSTGTTGLGYSITQYTKLSRQLISDVQAISSTIQDLQDQVDSLAEVVLQNRRGLDLFTAEQGGICLALQEKCCFYANKSGIVRDKIKALQEDLEKRRKEIIDNPFWTGLHGLLPYLLPLLRPLLCLLLLITFGPLIFNKIIAFVKQQMDAIQAKPIQVHYHRLEQEDNGGVYLRVS.

Residues 1 to 22 form the signal peptide; sequence MTVKDIPFWRVLLIFQTARVYA. Residues 23–514 lie on the Extracellular side of the membrane; it reads GFGDPREAIT…TGLHGLLPYL (492 aa). N117 and N233 each carry an N-linked (GlcNAc...) asparagine; by host glycan. The CXXC motif lies at 243–246; the sequence is CWLC. 3 cysteine pairs are disulfide-bonded: C243–C246, C243–C471, and C463–C470. 8 N-linked (GlcNAc...) asparagine; by host glycosylation sites follow: N260, N267, N288, N298, N312, N318, N327, and N345. The segment at 386–406 is fusion peptide; the sequence is FIPLLVGLGITTAVSTGTTGL. Coiled-coil stretches lie at residues 407 to 457 and 467 to 503; these read GYSI…LFTA and QEKCCFYANKSGIVRDKIKALQEDLEKRRKEIIDNPF. Residues 446–462 are immunosuppression; it reads LQNRRGLDLFTAEQGGI. A CX6CC motif is present at residues 463–471; that stretch reads CLALQEKCC. N475 carries an N-linked (GlcNAc...) asparagine; by host glycan. The chain crosses the membrane as a helical span at residues 515 to 535; it reads LPLLRPLLCLLLLITFGPLIF. Residues 536–574 are Cytoplasmic-facing; the sequence is NKIIAFVKQQMDAIQAKPIQVHYHRLEQEDNGGVYLRVS. The short motif at 558 to 561 is the YXXL motif; contains endocytosis signal element; the sequence is YHRL.

In terms of assembly, the mature envelope protein (Env) consists of a trimer of SU-TM heterodimers attached by a labile interchain disulfide bond. In terms of processing, specific enzymatic cleavages in vivo yield mature proteins. Envelope glycoproteins are synthesized as an inactive precursor that is N-glycosylated and processed likely by host cell furin or by a furin-like protease in the Golgi to yield the mature SU and TM proteins. The cleavage site between SU and TM requires the minimal sequence [KR]-X-[KR]-R. The R-peptide is released from the C-terminus of the cytoplasmic tail of the TM protein upon particle formation as a result of proteolytic cleavage by the viral protease. Cleavage of this peptide is required for TM to become fusogenic. The CXXC motif is highly conserved across a broad range of retroviral envelope proteins. It is thought to participate in the formation of a labile disulfide bond possibly with the CX6CC motif present in the transmembrane protein. Isomerization of the intersubunit disulfide bond to an SU intrachain disulfide bond is thought to occur upon receptor recognition in order to allow membrane fusion.

It is found in the virion membrane. The protein resides in the host cell membrane. In terms of biological role, the surface protein (SU) attaches the virus to the host cell by binding to its receptor. This interaction triggers the refolding of the transmembrane protein (TM) and is thought to activate its fusogenic potential by unmasking its fusion peptide. Fusion occurs at the host cell plasma membrane. Functionally, the transmembrane protein (TM) acts as a class I viral fusion protein. Under the current model, the protein has at least 3 conformational states: pre-fusion native state, pre-hairpin intermediate state, and post-fusion hairpin state. During viral and target cell membrane fusion, the coiled coil regions (heptad repeats) assume a trimer-of-hairpins structure, positioning the fusion peptide in close proximity to the C-terminal region of the ectodomain. The formation of this structure appears to drive apposition and subsequent fusion of viral and target cell membranes. Membranes fusion leads to delivery of the nucleocapsid into the cytoplasm. This chain is Envelope glycoprotein (env), found in Macaca mulatta (Rhesus macaque).